We begin with the raw amino-acid sequence, 279 residues long: Malonyl-[acyl-carrier protein] O-methyltransferase (279 aa).

It belongs to the methyltransferase superfamily.

The enzyme catalyses malonyl-[ACP] + S-adenosyl-L-methionine = malonyl-[ACP] methyl ester + S-adenosyl-L-homocysteine. It functions in the pathway cofactor biosynthesis; biotin biosynthesis. Converts the free carboxyl group of a malonyl-thioester to its methyl ester by transfer of a methyl group from S-adenosyl-L-methionine (SAM). It allows to synthesize pimeloyl-ACP via the fatty acid synthetic pathway. The polypeptide is Malonyl-[acyl-carrier protein] O-methyltransferase (Hahella chejuensis (strain KCTC 2396)).